We begin with the raw amino-acid sequence, 363 residues long: DNA replication and repair protein RecF (363 aa).

30-37 (GPNGSGKT) lines the ATP pocket.

It belongs to the RecF family.

It localises to the cytoplasm. Functionally, the RecF protein is involved in DNA metabolism; it is required for DNA replication and normal SOS inducibility. RecF binds preferentially to single-stranded, linear DNA. It also seems to bind ATP. In Chlorobium phaeobacteroides (strain BS1), this protein is DNA replication and repair protein RecF.